We begin with the raw amino-acid sequence, 101 residues long: NAD(P)H-quinone oxidoreductase subunit 4L, chloroplastic (101 aa).

The next 3 helical transmembrane spans lie at 2–22, 32–52, and 61–81; these read MTEH…YGLI, MCLE…SDLF, and IFSI…PAIV.

It belongs to the complex I subunit 4L family. As to quaternary structure, NDH is composed of at least 16 different subunits, 5 of which are encoded in the nucleus.

The protein localises to the plastid. The protein resides in the chloroplast thylakoid membrane. The enzyme catalyses a plastoquinone + NADH + (n+1) H(+)(in) = a plastoquinol + NAD(+) + n H(+)(out). It carries out the reaction a plastoquinone + NADPH + (n+1) H(+)(in) = a plastoquinol + NADP(+) + n H(+)(out). In terms of biological role, NDH shuttles electrons from NAD(P)H:plastoquinone, via FMN and iron-sulfur (Fe-S) centers, to quinones in the photosynthetic chain and possibly in a chloroplast respiratory chain. The immediate electron acceptor for the enzyme in this species is believed to be plastoquinone. Couples the redox reaction to proton translocation, and thus conserves the redox energy in a proton gradient. The sequence is that of NAD(P)H-quinone oxidoreductase subunit 4L, chloroplastic from Liriodendron tulipifera (Tuliptree).